The following is a 458-amino-acid chain: Macrophage scavenger receptor types I and II (458 aa).

The Cytoplasmic portion of the chain corresponds to 1–55; that stretch reads MTKEMTENQRLCPHEQEDADCSSESVKFDARSMTASLPHSTKNGPSLQEKLKSFK. Phosphoserine is present on residues S32 and S36. A helical; Signal-anchor for type II membrane protein membrane pass occupies residues 56–78; it reads AALIALYLLVFAVLIPVVGIVTA. A spacer region spans residues 79–114; sequence QLLNWEMKNCLVCSLNTSDTSQGPMEKENTSKVEMR. Residues 79–458 are Extracellular-facing; sequence QLLNWEMKNC…SEDAGVTCTS (380 aa). N94, N107, N147, N188, N253, and N271 each carry an N-linked (GlcNAc...) asparagine glycan. A coiled-coil region spans residues 209–259; it reads TAKQQEDISKLEERVYKVSAEVQSVKEEQAHVEQEVKQEVRVLNNITNDLR. The segment at 272–357 is disordered; sequence ITFIQGPPGP…VGGSTPLKTV (86 aa). Positions 277–350 constitute a Collagen-like domain; sequence GPPGPQGEKG…QKGEKGSVGG (74 aa). Residues 316–325 are compositionally biased toward gly residues; the sequence is GFPGGRGNPG. The segment covering 326-339 has biased composition (low complexity); it reads APGKPGRSGSPGPK. The SRCR domain occupies 357–457; sequence VRLVGGSGAH…HSEDAGVTCT (101 aa). Disulfide bonds link C382/C446, C395/C456, and C426/C436.

As to quaternary structure, homotrimer. Interacts with MYO18A.

It localises to the membrane. In terms of biological role, membrane glycoproteins implicated in the pathologic deposition of cholesterol in arterial walls during atherogenesis. Two types of receptor subunits exist. These receptors mediate the endocytosis of a diverse group of macromolecules, including modified low density lipoproteins (LDL). This is Macrophage scavenger receptor types I and II (Msr1) from Mus musculus (Mouse).